The chain runs to 241 residues: Beta-nerve growth factor (241 aa).

The N-terminal stretch at 1 to 18 (MSMLFYTLITAFLIGTQA) is a signal peptide. Residues 19–121 (EPHSESNVPA…PFNRTHRSKR (103 aa)) constitute a propeptide that is removed on maturation. Residues Asn69, Asn114, and Asn166 are each glycosylated (N-linked (GlcNAc...) asparagine). Disulfide bonds link Cys136/Cys201, Cys179/Cys229, and Cys189/Cys231. A 1-acyl-sn-glycero-3-phospho-(1D-myo-inositol) contacts are provided by Tyr173 and Lys209. Lys209 contacts a 1-acyl-sn-glycero-3-phospho-L-serine.

This sequence belongs to the NGF-beta family. As to quaternary structure, homodimer. The homodimer interacts with a single NTRK1 chain. The homodimer interacts with a single NGFR chain. The NGF dimer interacts with a single SORCS2 chain (via extracellular domain). The NGF precursor (proNGF) binds to a receptor complex formed by SORT1 and NGFR, which leads to NGF endocytosis. Both mature NGF and the immature NGF precursor (proNGF) interact with SORCS2 and with the heterodimer formed by SORCS2 and NGFR (via extracellular domains). The NGF precursor (proNGF) has much higher affinity for SORCS2 than mature NGF. The NGF precursor (proNGF) has much higher affinity for SORT1 than mature NGF. Interacts with ADAM10 in a divalent cation-dependent manner. Interacts with SORCS3.

It localises to the secreted. It is found in the endosome lumen. Nerve growth factor is important for the development and maintenance of the sympathetic and sensory nervous systems. Extracellular ligand for the NTRK1 and NGFR receptors, activates cellular signaling cascades to regulate neuronal proliferation, differentiation and survival. The immature NGF precursor (proNGF) functions as a ligand for the heterodimeric receptor formed by SORCS2 and NGFR, and activates cellular signaling cascades that lead to inactivation of RAC1 and/or RAC2, reorganization of the actin cytoskeleton and neuronal growth cone collapse. In contrast to mature NGF, the precursor form (proNGF) promotes neuronal apoptosis (in vitro). Inhibits metalloproteinase-dependent proteolysis of platelet glycoprotein VI. Binds lysophosphatidylinositol and lysophosphatidylserine between the two chains of the homodimer. The lipid-bound form promotes histamine relase from mast cells, contrary to the lipid-free form. The polypeptide is Beta-nerve growth factor (NGF) (Pan troglodytes (Chimpanzee)).